A 1129-amino-acid chain; its full sequence is PAN2-PAN3 deadenylation complex catalytic subunit PAN2 (1129 aa).

WD repeat units follow at residues 20–60 (PPAV…YTSY), 104–146 (PDFK…DTLP), 148–183 (DAQY…VIKV), 186–226 (GHTG…FSLK), and 280–319 (LYDS…HFPE). Positions 320-457 (YSNPTEFADH…DLHLDDVTRK (138 aa)) are linker. The segment at 396–427 (RTKRRNQIEVTRQTDRSSDSLTPPKFLSEKSR) is disordered. The 373-residue stretch at 458 to 830 (DVPAMYGNVE…LPSVLTFQTK (373 aa)) folds into the USP domain. The region spanning 880–1052 (VAIDAEFIRL…IEDATTALKL (173 aa)) is the Exonuclease domain. The a divalent metal cation site is built by D883, E885, D992, and D1045. The interval 1083-1129 (APGSGNRNSMPAGMTATGAGRDTPEPMTTPKKGGAFGGVGFRSPMRR) is disordered.

Belongs to the peptidase C19 family. PAN2 subfamily. As to quaternary structure, forms a heterotrimer with an asymmetric homodimer of the regulatory subunit PAN3 to form the poly(A)-nuclease (PAN) deadenylation complex. The cofactor is a divalent metal cation.

It is found in the cytoplasm. The catalysed reaction is Exonucleolytic cleavage of poly(A) to 5'-AMP.. With respect to regulation, positively regulated by the regulatory subunit PAN3. In terms of biological role, catalytic subunit of the poly(A)-nuclease (PAN) deadenylation complex, one of two cytoplasmic mRNA deadenylases involved in mRNA turnover. PAN specifically shortens poly(A) tails of RNA and the activity is stimulated by poly(A)-binding protein PAB1. PAN deadenylation is followed by rapid degradation of the shortened mRNA tails by the CCR4-NOT complex. Deadenylated mRNAs are then degraded by two alternative mechanisms, namely exosome-mediated 3'-5' exonucleolytic degradation, or deadenylation-dependent mRNA decaping and subsequent 5'-3' exonucleolytic degradation by XRN1. May also be involved in post-transcriptional maturation of mRNA poly(A) tails. The polypeptide is PAN2-PAN3 deadenylation complex catalytic subunit PAN2 (Phaeosphaeria nodorum (strain SN15 / ATCC MYA-4574 / FGSC 10173) (Glume blotch fungus)).